Here is a 331-residue protein sequence, read N- to C-terminus: Glutaminase-asparaginase (331 aa).

The 330-residue stretch at 2–331 (NNVVIVATGG…KEIQNMFWNY (330 aa)) folds into the Asparaginase/glutaminase domain. Residue T12 is the Acyl-ester intermediate of the active site. Residues S59 and 92-93 (TD) contribute to the substrate site.

The protein belongs to the asparaginase 1 family. Homotetramer.

It localises to the periplasm. It carries out the reaction L-glutamine + H2O = L-glutamate + NH4(+). The catalysed reaction is L-asparagine + H2O = L-aspartate + NH4(+). In Acinetobacter glutaminasificans, this protein is Glutaminase-asparaginase (ansB).